A 284-amino-acid chain; its full sequence is uncharacterized protein (284 aa).

This is an uncharacterized protein from Methanothermobacter thermautotrophicus (Methanobacterium thermoformicicum).